Reading from the N-terminus, the 28-residue chain is leu operon leader peptide (28 aa).

Functionally, involved in control of the biosynthesis of leucine. This is leu operon leader peptide (leuL) from Salmonella typhi.